Reading from the N-terminus, the 75-residue chain is MSIHISSKFEEAMKELENIVAELESGNVPLERSVELFNKGKELHKYCDKVIKEISLHIESVDPDDKELSAKFSDD.

This sequence belongs to the XseB family. In terms of assembly, heterooligomer composed of large and small subunits.

The protein resides in the cytoplasm. The enzyme catalyses Exonucleolytic cleavage in either 5'- to 3'- or 3'- to 5'-direction to yield nucleoside 5'-phosphates.. Bidirectionally degrades single-stranded DNA into large acid-insoluble oligonucleotides, which are then degraded further into small acid-soluble oligonucleotides. The chain is Exodeoxyribonuclease 7 small subunit from Anaplasma phagocytophilum (strain HZ).